We begin with the raw amino-acid sequence, 386 residues long: Alanine racemase (386 aa).

The Proton acceptor; specific for D-alanine role is filled by Lys-38. Residue Lys-38 is modified to N6-(pyridoxal phosphate)lysine. Position 136 (Arg-136) interacts with substrate. Tyr-267 serves as the catalytic Proton acceptor; specific for L-alanine. Residue Met-315 coordinates substrate.

The protein belongs to the alanine racemase family. Requires pyridoxal 5'-phosphate as cofactor.

It catalyses the reaction L-alanine = D-alanine. It participates in amino-acid biosynthesis; D-alanine biosynthesis; D-alanine from L-alanine: step 1/1. In terms of biological role, catalyzes the interconversion of L-alanine and D-alanine. May also act on other amino acids. This Clostridium perfringens (strain ATCC 13124 / DSM 756 / JCM 1290 / NCIMB 6125 / NCTC 8237 / Type A) protein is Alanine racemase (alr).